Reading from the N-terminus, the 197-residue chain is Large ribosomal subunit protein uL10 (197 aa).

A disordered region spans residues 162–197; the sequence is READGETAETPAQETASDDSKSTKAEASDASTTENK. Basic and acidic residues predominate over residues 179–188; sequence DDSKSTKAEA.

The protein belongs to the universal ribosomal protein uL10 family. As to quaternary structure, part of the ribosomal stalk of the 50S ribosomal subunit. The N-terminus interacts with L11 and the large rRNA to form the base of the stalk. The C-terminus forms an elongated spine to which L12 dimers bind in a sequential fashion forming a multimeric L10(L12)X complex.

Forms part of the ribosomal stalk, playing a central role in the interaction of the ribosome with GTP-bound translation factors. The polypeptide is Large ribosomal subunit protein uL10 (Oenococcus oeni (strain ATCC BAA-331 / PSU-1)).